The primary structure comprises 366 residues: Growth hormone secretagogue receptor type 1 (366 aa).

Topologically, residues 1 to 40 are extracellular; it reads MWNATPSEEPGFNLTLADLDWDASPGNDSLGDELLQLFPA. N-linked (GlcNAc...) asparagine glycans are attached at residues Asn13 and Asn27. A helical membrane pass occupies residues 41–66; the sequence is PLLAGVTATCVALFVVGIAGNLLTML. Residues 67–72 are Cytoplasmic-facing; the sequence is VVSRFR. Residues 73–96 form a helical membrane-spanning segment; the sequence is ELRTTTNLYLSSMAFSDLLIFLCM. Over 97 to 117 the chain is Extracellular; that stretch reads PLDLVRLWQYRPWNFGDLLCK. An intrachain disulfide couples Cys116 to Cys198. Residues 118 to 139 traverse the membrane as a helical segment; the sequence is LFQFVSESCTYATVLTITALSV. Residues 140-162 are Cytoplasmic-facing; that stretch reads ERYFAICFPLRAKVVVTKGRVKL. A helical membrane pass occupies residues 163 to 183; that stretch reads VIFVIWAVAFCSAGPIFVLVG. The Extracellular segment spans residues 184 to 211; it reads VEHENGTDPWDTNECRPTEFAVRSGLLT. The chain crosses the membrane as a helical span at residues 212-235; the sequence is VMVWVSSIFFFLPVFCLTVLYSLI. The Cytoplasmic portion of the chain corresponds to 236-263; it reads GRKLWRRRRGDAVVGASLRDQNHKQTVK. The helical transmembrane segment at 264-285 threads the bilayer; it reads MLAVVVFAFILCWLPFHVGRYL. The Extracellular portion of the chain corresponds to 286–302; it reads FSKSFEPGSLEIAQISQ. Residues 303–326 traverse the membrane as a helical segment; that stretch reads YCNLVSFVLFYLSAAINPILYNIM. Residues 327 to 366 are Cytoplasmic-facing; that stretch reads SKKYRVAVFRLLGFEPFSQRKLSTLKDESSRAWTESSINT.

This sequence belongs to the G-protein coupled receptor 1 family. Pituitary and hypothalamus.

Its subcellular location is the cell membrane. In terms of biological role, receptor for ghrelin, coupled to G-alpha-11 proteins. Stimulates growth hormone secretion. Also binds other growth hormone releasing peptides (GHRP) (e.g. Met-enkephalin and GHRP-6) as well as non-peptide, low molecular weight secretagogues (e.g. L-692,429, MK-0677, adenosine). The chain is Growth hormone secretagogue receptor type 1 (GHSR) from Homo sapiens (Human).